Here is a 335-residue protein sequence, read N- to C-terminus: Type 1 fimbrin D-mannose specific adhesin (335 aa).

The first 22 residues, 1–22 (MKIYSALLLAGTALFFTHPALA), serve as a signal peptide directing secretion.

This sequence belongs to the fimbrial protein family.

The protein resides in the fimbrium. Involved in regulation of length and mediation of adhesion of type 1 fimbriae (but not necessary for the production of fimbriae). A mannose-binding adhesin. The sequence is that of Type 1 fimbrin D-mannose specific adhesin (fimH) from Salmonella typhimurium (strain LT2 / SGSC1412 / ATCC 700720).